Reading from the N-terminus, the 871-residue chain is Metabotropic glutamate receptor 6 (871 aa).

An N-terminal signal peptide occupies residues 1–23; sequence MGRLRVLLLWLAWWLSQAGIAHG. The Extracellular portion of the chain corresponds to 24–579; sequence AGSVRLAGGL…VVRLTWSSPW (556 aa). A disulfide bridge links Cys51 with Cys93. Residues Ser148, 169-171, and Tyr219 each bind L-glutamate; that span reads AST. Intrachain disulfides connect Cys238–Cys530, Cys361–Cys377, Cys417–Cys424, Cys512–Cys531, Cys516–Cys534, Cys537–Cys549, and Cys552–Cys565. A glycan (N-linked (GlcNAc...) asparagine) is linked at Asn290. Asp301 is a binding site for L-glutamate. L-glutamate is bound at residue Lys394. Residues Asn445 and Asn473 are each glycosylated (N-linked (GlcNAc...) asparagine). Asn561 carries an N-linked (GlcNAc...) asparagine glycan. Residues 580–602 traverse the membrane as a helical segment; the sequence is AALPLLLAVLGIMATTTIIATFM. At 603-616 the chain is on the cytoplasmic side; it reads RHNDTPIVRASGRE. Residues 617-637 traverse the membrane as a helical segment; that stretch reads LSYVLLTGIFLIYAITFLMVA. The Extracellular segment spans residues 638–648; that stretch reads EPCAAVCASRR. A helical transmembrane segment spans residues 649–667; the sequence is LLLGLGTTLSYSALLTKTN. Residues 668–691 are Cytoplasmic-facing; the sequence is RIYRIFEQGKRSVTPPPFISPTSQ. The helical transmembrane segment at 692-712 threads the bilayer; that stretch reads LVITFGLTSLQVVGVIAWLGA. Residues 713 to 742 are Extracellular-facing; that stretch reads QPPHSVIDYEEQRTVDPEQARGVLKCDMSD. Residues 743-764 traverse the membrane as a helical segment; sequence LSLIGCLGYSLLLMVTCTVYAI. The Cytoplasmic segment spans residues 765–777; it reads KARGVPETFNEAK. Residues 778–800 traverse the membrane as a helical segment; it reads PIGFTMYTTCIIWLAFVPIFFGT. The Extracellular portion of the chain corresponds to 801–813; sequence AQSAEKIYIQTTT. A helical membrane pass occupies residues 814 to 839; it reads LTVSLSLSASVSLGMLYVPKTYVILF. Topologically, residues 840–871 are cytoplasmic; sequence HPEQNVQKRKRSLKKTSTMAAPPKSENSEDAK. Residues 848–871 are disordered; it reads RKRSLKKTSTMAAPPKSENSEDAK.

This sequence belongs to the G-protein coupled receptor 3 family. As to quaternary structure, homodimer. Interacts with GPR179. Interacts with photoreceptor synaptic protein LRIT1 (via its N-terminal extracellular domain). As to expression, detected in the outer plexiform layer in retina (at protein level).

It is found in the cell membrane. The protein localises to the endoplasmic reticulum membrane. The protein resides in the golgi apparatus membrane. Its subcellular location is the cell projection. It localises to the dendrite. In terms of biological role, G-protein coupled receptor for glutamate. Ligand binding causes a conformation change that triggers signaling via guanine nucleotide-binding proteins (G proteins) and modulates the activity of down-stream effectors, such as adenylate cyclase. Signaling inhibits adenylate cyclase activity. Signaling stimulates TRPM1 channel activity and Ca(2+) uptake. Required for normal vision. The chain is Metabotropic glutamate receptor 6 (Grm6) from Mus musculus (Mouse).